The chain runs to 146 residues: Acidic phospholipase A2 2 (146 aa).

An N-terminal signal peptide occupies residues Met-1–Ser-21. A propeptide spanning residues Asn-22–Leu-27 is cleaved from the precursor. Intrachain disulfides connect Cys-38/Cys-98, Cys-53/Cys-145, Cys-55/Cys-71, Cys-70/Cys-126, Cys-77/Cys-119, Cys-87/Cys-112, and Cys-105/Cys-117. Ca(2+) contacts are provided by Tyr-54, Gly-56, and Gly-58. The active site involves His-74. Residue Asp-75 participates in Ca(2+) binding. Asp-120 is a catalytic residue.

The protein belongs to the phospholipase A2 family. Group I subfamily. D49 sub-subfamily. Requires Ca(2+) as cofactor. In terms of tissue distribution, expressed by the venom gland.

It is found in the secreted. The enzyme catalyses a 1,2-diacyl-sn-glycero-3-phosphocholine + H2O = a 1-acyl-sn-glycero-3-phosphocholine + a fatty acid + H(+). In terms of biological role, PLA2 catalyzes the calcium-dependent hydrolysis of the 2-acyl groups in 3-sn-phosphoglycerides. The protein is Acidic phospholipase A2 2 of Naja kaouthia (Monocled cobra).